The following is a 157-amino-acid chain: uncharacterized protein (157 aa).

This is an uncharacterized protein from Aquifex aeolicus (strain VF5).